The chain runs to 402 residues: Multidrug resistance protein MdtH (402 aa).

Topologically, residues 1–12 are cytoplasmic; sequence MSRVSQARNLGK. A helical transmembrane segment spans residues 13–33; it reads YFLLIDNMLVVLGFFVVFPLI. Residues 34–98 are Periplasmic-facing; it reads SIRFVDQMGW…GFATMGIAHE (65 aa). Residues 99–116 form a helical membrane-spanning segment; sequence PWLLWFSCLLSGLGGTLF. The Cytoplasmic portion of the chain corresponds to 117 to 138; sequence DPPRSALVVKLIRPQQRGRFFS. Residues 139–159 traverse the membrane as a helical segment; the sequence is LLMMQDSAGAVIGALLGSWLL. Topologically, residues 160 to 164 are periplasmic; the sequence is QYDFR. The helical transmembrane segment at 165–185 threads the bilayer; that stretch reads LVCATGAVLFVLCAAFNAWLL. Residues 186–213 are Cytoplasmic-facing; sequence PAWKLSTVRTPVREGMTRVMRDKRFVTY. A helical membrane pass occupies residues 214–234; the sequence is VLTLAGYYMLAVQVMLMLPIM. Residues 235 to 243 are Periplasmic-facing; the sequence is VNDVAGAPS. The chain crosses the membrane as a helical span at residues 244–264; it reads AVKWMYAIEACLSLTLLYPIA. At 265–276 the chain is on the cytoplasmic side; that stretch reads RWSEKHFRLEHR. Residues 277-297 traverse the membrane as a helical segment; the sequence is LMAGLLIMSLSMMPVGMVSGL. Residues 298–299 lie on the Periplasmic side of the membrane; the sequence is QQ. The helical transmembrane segment at 300–320 threads the bilayer; sequence LFTLICLFYIGSIIAEPARET. Residues 321 to 339 lie on the Cytoplasmic side of the membrane; that stretch reads LSASLADARARGSYMGFSR. A helical transmembrane segment spans residues 340-360; it reads LGLAIGGAIGYIGGGWLFDLG. At 361–367 the chain is on the periplasmic side; the sequence is KSVHQPE. A helical transmembrane segment spans residues 368 to 388; the sequence is LPWMMLGIIGIFTFLALGWQF. Residues 389–402 are Cytoplasmic-facing; that stretch reads SQKRAARRLLERDA.

It belongs to the major facilitator superfamily. DHA1 family. MdtH (TC 2.A.1.2.21) subfamily.

The protein resides in the cell inner membrane. Its function is as follows. Confers resistance to norfloxacin and enoxacin. This chain is Multidrug resistance protein MdtH, found in Escherichia coli O157:H7.